The chain runs to 81 residues: Sulfur carrier protein TusA (81 aa).

The Cysteine persulfide intermediate role is filled by cysteine 19.

It belongs to the sulfur carrier protein TusA family.

Its subcellular location is the cytoplasm. Functionally, sulfur carrier protein which probably makes part of a sulfur-relay system. In Shewanella baltica (strain OS223), this protein is Sulfur carrier protein TusA.